The primary structure comprises 407 residues: Myeloid cell nuclear differentiation antigen (407 aa).

The region spanning 1–88 (MVNEYKKILL…VNNLRKEKSK (88 aa)) is the Pyrin domain. Residues 108-207 (EVGLAAPAPT…RQVDARRNVP (100 aa)) are disordered. Residues 131–137 (PVAQKRK) carry the Nuclear localization signal motif. Residues 139–148 (PNKEKTEAKR) are compositionally biased toward basic and acidic residues. The segment covering 177-190 (QTSSSTPSNTSFTP) has biased composition (low complexity). The HIN-200 domain maps to 196–394 (AQRQVDARRN…CGSHSFIKVI (199 aa)).

Participates in a ternary complex with YY1 and the YY1 target DNA element. Binds nucleolin and nucleophosmin/NPM/B23. As to expression, expressed constitutively in cells of the myeloid lineage. Found in promyelocyte stage cells as well as in all other stage cells including peripheral blood monocytes and granulocytes. Also appears in myeloblast cells in some cases of acute myeloid Leukemia.

The protein resides in the nucleus. It is found in the cytoplasm. In terms of biological role, may act as a transcriptional activator/repressor in the myeloid lineage. Plays a role in the granulocyte/monocyte cell-specific response to interferon. Stimulates the DNA binding of the transcriptional repressor protein YY1. The sequence is that of Myeloid cell nuclear differentiation antigen (MNDA) from Homo sapiens (Human).